A 338-amino-acid chain; its full sequence is MSSLRLLISDSYDPWFNLAVEECIFRQMPTTQRVLFLWRNAETVVIGRAQNPWKECNTRRMEEDGIKLARRSSGGGAVFHDLGNTCFTFMAGKPEYDKSVSTQIVLDALSALGLKASASGRNDLVVETADGVRKVSGSAYRETKDRGFHHGTLLLNADLNRLADYLNPDIKKLQAKGITSVRSRVANLVELLPSVDHQVICQAVTQAFFDYFGEQCEPEIISPSAYPDLPGFSEQFARQSSWEWNFGQAPDFSHLLDNRFTWGGIELHFDVERGVIIRAQVYTDSLNPAPLEALACALQGTAYRPENMAATCQALITAFPEQQNELQELAEWLEQSLR.

The region spanning Pro29–Cys216 is the BPL/LPL catalytic domain. ATP-binding positions include Arg71, Gly76–Phe79, and Lys134. Position 134 (Lys134) interacts with (R)-lipoate.

This sequence belongs to the LplA family. Monomer.

It localises to the cytoplasm. It carries out the reaction L-lysyl-[lipoyl-carrier protein] + (R)-lipoate + ATP = N(6)-[(R)-lipoyl]-L-lysyl-[lipoyl-carrier protein] + AMP + diphosphate + H(+). It participates in protein modification; protein lipoylation via exogenous pathway; protein N(6)-(lipoyl)lysine from lipoate: step 1/2. It functions in the pathway protein modification; protein lipoylation via exogenous pathway; protein N(6)-(lipoyl)lysine from lipoate: step 2/2. In terms of biological role, catalyzes both the ATP-dependent activation of exogenously supplied lipoate to lipoyl-AMP and the transfer of the activated lipoyl onto the lipoyl domains of lipoate-dependent enzymes. The protein is Lipoate-protein ligase A of Pectobacterium carotovorum subsp. carotovorum (strain PC1).